The primary structure comprises 322 residues: Outer membrane protein assembly factor BamC (322 aa).

The first 22 residues, 1-22, serve as a signal peptide directing secretion; the sequence is MISLLAVAVLAGCSNPETRSQA.

Belongs to the BamC family. Part of the Bam complex.

It localises to the cell outer membrane. Its function is as follows. Part of the outer membrane protein assembly complex, which is involved in assembly and insertion of beta-barrel proteins into the outer membrane. This Oceanimonas sp. (strain GK1 / IBRC-M 10197) protein is Outer membrane protein assembly factor BamC.